We begin with the raw amino-acid sequence, 137 residues long: Small ribosomal subunit protein uS11A (137 aa).

An N-acetylserine modification is found at Ser2. Positions 117-137 are disordered; sequence DVTPVPSDSTRKKGGRRGRRL. Residues 128 to 137 show a composition bias toward basic residues; that stretch reads KKGGRRGRRL.

Belongs to the universal ribosomal protein uS11 family. As to quaternary structure, component of the small ribosomal subunit (SSU). Mature yeast ribosomes consist of a small (40S) and a large (60S) subunit. The 40S small subunit contains 1 molecule of ribosomal RNA (18S rRNA) and 33 different proteins (encoded by 57 genes). The large 60S subunit contains 3 rRNA molecules (25S, 5.8S and 5S rRNA) and 46 different proteins (encoded by 81 genes). uS11 interacts with eS1 forming part of the mRNA exit tunnel. uS11 interacts with snoRNA U3. uS11 interacts with MPP10. Component of the ribosomal small subunit (SSU) processome composed of at least 40 protein subunits and snoRNA U3. In terms of processing, N-terminally acetylated by acetyltransferase NatA.

The protein resides in the cytoplasm. Its subcellular location is the nucleus. It localises to the nucleolus. In terms of biological role, component of the ribosome, a large ribonucleoprotein complex responsible for the synthesis of proteins in the cell. The small ribosomal subunit (SSU) binds messenger RNAs (mRNAs) and translates the encoded message by selecting cognate aminoacyl-transfer RNA (tRNA) molecules. The large subunit (LSU) contains the ribosomal catalytic site termed the peptidyl transferase center (PTC), which catalyzes the formation of peptide bonds, thereby polymerizing the amino acids delivered by tRNAs into a polypeptide chain. The nascent polypeptides leave the ribosome through a tunnel in the LSU and interact with protein factors that function in enzymatic processing, targeting, and the membrane insertion of nascent chains at the exit of the ribosomal tunnel. uS11 is involved in nucleolar processing of pre-18S ribosomal RNA and ribosome assembly. This Saccharomyces cerevisiae (strain ATCC 204508 / S288c) (Baker's yeast) protein is Small ribosomal subunit protein uS11A.